Reading from the N-terminus, the 652-residue chain is DNA mismatch repair protein MutL (652 aa).

Disordered regions lie at residues leucine 357–serine 377 and proline 425–aspartate 457. Over residues serine 365–tyrosine 375 the composition is skewed to polar residues.

Belongs to the DNA mismatch repair MutL/HexB family.

In terms of biological role, this protein is involved in the repair of mismatches in DNA. It is required for dam-dependent methyl-directed DNA mismatch repair. May act as a 'molecular matchmaker', a protein that promotes the formation of a stable complex between two or more DNA-binding proteins in an ATP-dependent manner without itself being part of a final effector complex. This chain is DNA mismatch repair protein MutL, found in Colwellia psychrerythraea (strain 34H / ATCC BAA-681) (Vibrio psychroerythus).